We begin with the raw amino-acid sequence, 688 residues long: Transcriptional regulatory protein GAT1 (688 aa).

Disordered stretches follow at residues 83-125 (NHNS…SPMI), 259-278 (TSAS…NNSS), 343-438 (FTGI…GVSC), 482-565 (IKKR…NLDK), and 639-678 (LMTM…TANN). Over residues 259-271 (TSASITSPTSTFS) the composition is skewed to low complexity. Positions 359 to 368 (FDNKPKDDHF) are enriched in basic and acidic residues. Positions 369 to 379 (NTSLSVSQQQP) are enriched in polar residues. The segment covering 382–397 (KKSKRKSTITKSKKKA) has biased composition (basic residues). A compositionally biased stretch (low complexity) spans 402 to 428 (TTITSTGSTITTKSTNSNSTGKGTATG). The segment at 438–462 (CTNCGTKTTPLWRRNPQGQPLCNAC) adopts a GATA-type zinc-finger fold. Composition is skewed to low complexity over residues 488 to 510 (GNNN…NNKS), 529 to 543 (TNNT…SKSP), 552 to 565 (FDNN…NLDK), 639 to 654 (LMTM…LSTT), and 662 to 678 (NNEG…TANN).

It localises to the nucleus. Its function is as follows. Transcriptional regulator of nitrogen utilization required for nitrogen catabolite repression and utilization of isoleucine, tyrosine and tryptophan as nitrogen sources. Controls expression of the MEP2 ammonium permease, the DUR1,2 urea amidolyase, and the transcription factor STP1, which in turn mediates SAP2 expression, a long-known virulence attribute of C.albicans. Influences the filamentation process depending upon the nitrogen sources available. Required for virulence in a mouse systemic infection model. The protein is Transcriptional regulatory protein GAT1 (GAT1) of Candida albicans (strain SC5314 / ATCC MYA-2876) (Yeast).